The chain runs to 113 residues: Nucleoid-associated protein Cthe_2143 (113 aa).

This sequence belongs to the YbaB/EbfC family. As to quaternary structure, homodimer.

The protein resides in the cytoplasm. It localises to the nucleoid. Binds to DNA and alters its conformation. May be involved in regulation of gene expression, nucleoid organization and DNA protection. This chain is Nucleoid-associated protein Cthe_2143, found in Acetivibrio thermocellus (strain ATCC 27405 / DSM 1237 / JCM 9322 / NBRC 103400 / NCIMB 10682 / NRRL B-4536 / VPI 7372) (Clostridium thermocellum).